Consider the following 1343-residue polypeptide: MGLEAQRLPGAEEAPVRVALRVRPLLPKELLHGHQSCLQVEPGLGRVTLGRDRHFGFHVVLAEDAGQEAVYQACVQPLLEAFFEGFNATVFAYGQTGSGKTYTMGEASVASLLEDEQGIVPRAMAEAFKLIDENDLLDCLVHVSYLEVYKEEFRDLLEVGTASRDIQLREDERGNVVLCGVKEVDVEGLDEVLSLLEMGNAARHTGATHLNHLSSRSHTVFTVTLEQRGRAPSRLPRPAPGQLLVSKFHFVDLAGSERVLKTGSTGERLKESIQINSSLLALGNVISALGDPQRRGSHIPYRDSKITRILKDSLGGNAKTVMIACVSPSSSDFDETLNTLNYASRAQNIRNRATVNWRPEAERPPEETASGARGPPRHRSETRIIHRGRRAPGPATASAAAAMRLGAECARYRACTDAAYSLLRELQAEPGLPGAAARKVRDWLCAVEGERSALSSASGPDSGIESASVEDQAAQGAGGRKEDEGAQQLLTLQNQVARLEEENRDFLAALEDAMEQYKLQSDRLREQQEEMVELRLRLELVRPGWGGPRLLNGLPPGSFVPRPHTAPLGGAHAHVLGMVPPACLPGDEVGSEQRGEQVTNGREAGAELLTEVNRLGSGSSAASEEEEEEEEPPRRTLHLRRNRISNCSQRAGARPGSLPERKGPELCLEELDAAIPGSRAVGGSKARVQARQVPPATASEWRLAQAQQKIRELAINIRMKEELIGELVRTGKAAQALNRQHSQRIRELEQEAEQVRAELSEGQRQLRELEGKELQDAGERSRLQEFRRRVAAAQSQVQVLKEKKQATERLVSLSAQSEKRLQELERNVQLMRQQQGQLQRRLREETEQKRRLEAEMSKRQHRVKELELKHEQQQKILKIKTEEIAAFQRKRRSGSNGSVVSLEQQQKIEEQKKWLDQEMEKVLQQRRALEELGEELHKREAILAKKEALMQEKTGLESKRLRSSQALNEDIVRVSSRLEHLEKELSEKSGQLRQGSAQSQQQIRGEIDSLRQEKDSLLKQRLEIDGKLRQGSLLSPEEERTLFQLDEAIEALDAAIEYKNEAITCRQRVLRASASLLSQCEMNLMAKLSYLSSSETRALLCKYFDKVVTLREEQHQQQIAFSELEMQLEEQQRLVYWLEVALERQRLEMDRQLTLQQKEHEQNMQLLLQQSRDHLGEGLADSRRQYEARIQALEKELGRYMWINQELKQKLGGVNAVGHSRGGEKRSLCSEGRQAPGNEDELHLAPELLWLSPLTEGAPRTREETRDLVHAPLPLTWKRSSLCGEEQGSPEELRQREAAEPLVGRVLPVGEAGLPWNFGPLSKPRRELRRASPGMIDVRKNPL.

The 335-residue stretch at 15 to 349 folds into the Kinesin motor domain; that stretch reads PVRVALRVRP…LNYASRAQNI (335 aa). 94-101 provides a ligand contact to ATP; the sequence is GQTGSGKT. Disordered regions lie at residues 356–382, 451–483, and 611–639; these read NWRPEAERPPEETASGARGPPRHRSET, RSALSSASGPDSGIESASVEDQAAQGAGGRKED, and EVNRLGSGSSAASEEEEEEEEPPRRTLHL. The interaction with DLG5 stretch occupies residues 358-479; sequence RPEAERPPEE…EDQAAQGAGG (122 aa). The segment at 358-1206 is interaction with SMO; the sequence is RPEAERPPEE…LGRYMWINQE (849 aa). The stretch at 480–542 forms a coiled coil; sequence RKEDEGAQQL…ELRLRLELVR (63 aa). The segment at 513–775 is sufficient for interaction with NPHP1; the sequence is AMEQYKLQSD…LRELEGKELQ (263 aa). Coiled-coil stretches lie at residues 698–1057 and 1109–1211; these read ASEW…AAIE and TLRE…KQKL. At serine 898 the chain carries Phosphoserine. 2 disordered regions span residues 1219 to 1238 and 1310 to 1343; these read HSRGGEKRSLCSEGRQAPGN and GEAGLPWNFGPLSKPRRELRRASPGMIDVRKNPL.

Belongs to the TRAFAC class myosin-kinesin ATPase superfamily. Kinesin family. KIF27 subfamily. As to quaternary structure, can form homodimers and interacts with microtubules. Interacts with GLI1, GLI2, GLI3, SMO and SUFU. Interacts with NPHP1. Interacts with SMO and DLG5 (via PDZ4 or guanylate kinase-like domain). Polyubiquitinated by UBR3. As to expression, embryonic stem cells, melanotic melanoma and Jurkat T-cells. Expressed in heart, lung, liver, kidney, testis, retina, placenta, pancreas, colon, small intestin, prostate and thymus.

The protein resides in the cell projection. Its subcellular location is the cilium. It localises to the cytoplasm. It is found in the cytoskeleton. The protein localises to the cilium basal body. Functionally, essential for hedgehog signaling regulation: acts both as a negative and positive regulator of sonic hedgehog (Shh) and Indian hedgehog (Ihh) pathways, acting downstream of SMO, through both SUFU-dependent and -independent mechanisms. Involved in the regulation of microtubular dynamics. Required for proper organization of the ciliary tip and control of ciliary localization of SUFU-GLI2 complexes. Required for localization of GLI3 to cilia in response to Shh. Negatively regulates Shh signaling by preventing inappropriate activation of the transcriptional activator GLI2 in the absence of ligand. Positively regulates Shh signaling by preventing the processing of the transcription factor GLI3 into its repressor form. In keratinocytes, promotes the dissociation of SUFU-GLI2 complexes, GLI2 nuclear translocation and Shh signaling activation. Involved in the regulation of epidermal differentiation and chondrocyte development. The sequence is that of Kinesin-like protein KIF7 (KIF7) from Homo sapiens (Human).